Consider the following 440-residue polypeptide: Putative sodium-coupled neutral amino acid transporter 8 (440 aa).

The next 11 membrane-spanning stretches (helical) occupy residues alanine 29–phenylalanine 49, alanine 58–tyrosine 78, isoleucine 100–leucine 120, phenylalanine 156–serine 176, isoleucine 183–methionine 203, methionine 223–isoleucine 243, tryptophan 255–isoleucine 275, valine 300–leucine 320, valine 350–isoleucine 370, valine 373–leucine 393, and valine 418–alanine 438.

It belongs to the amino acid/polyamine transporter 2 family.

The protein localises to the membrane. Functionally, putative sodium-dependent amino acid/proton antiporter. The chain is Putative sodium-coupled neutral amino acid transporter 8 (slc38a8) from Xenopus tropicalis (Western clawed frog).